Consider the following 258-residue polypeptide: Snake venom serine protease 2 (258 aa).

The signal sequence occupies residues 1 to 18 (MVLIRVLANLLILQLSYA). Positions 19–24 (QKSSEL) are excised as a propeptide. In terms of domain architecture, Peptidase S1 spans 25 to 249 (VFGGRPCNIN…YNDWVQSIIA (225 aa)). Cystine bridges form between cysteine 31-cysteine 163, cysteine 50-cysteine 66, cysteine 98-cysteine 256, cysteine 142-cysteine 210, cysteine 174-cysteine 189, and cysteine 200-cysteine 225. N-linked (GlcNAc...) asparagine glycosylation occurs at asparagine 44. Catalysis depends on charge relay system residues histidine 65 and aspartate 110. N-linked (GlcNAc...) asparagine glycans are attached at residues asparagine 122 and asparagine 185. Residue serine 204 is the Charge relay system of the active site.

Belongs to the peptidase S1 family. Snake venom subfamily. In terms of assembly, monomer. Expressed by the venom gland.

Its subcellular location is the secreted. Its activity is regulated as follows. Inhibited by PMSF at 2 mM concentration but not by EDTA. Functionally, snake venom serine protease that may act in the hemostasis system of the prey. Has weak fibrinogen clotting activity. Possesses amidolysis activity towards S-2251 (substrate for plasmin) but has no hydrolytic activity with S-2302 (plasma kallikrein substrate) or S-2238 (thrombin substrate). The chain is Snake venom serine protease 2 from Protobothrops jerdonii (Jerdon's pitviper).